The following is a 281-amino-acid chain: MEMO1 family protein PAE0818 (281 aa).

The protein belongs to the MEMO1 family.

In Pyrobaculum aerophilum (strain ATCC 51768 / DSM 7523 / JCM 9630 / CIP 104966 / NBRC 100827 / IM2), this protein is MEMO1 family protein PAE0818.